Consider the following 360-residue polypeptide: LETM1 domain-containing protein 1 (360 aa).

The interval 1-110 is required and sufficient for mitochondrial import; the sequence is MALSRVCWAR…KKARRIKTNM (110 aa). The Cytoplasmic segment spans residues 1-137; sequence MALSRVCWAR…LRQFRQDVTK (137 aa). A helical transmembrane segment spans residues 138-158; that stretch reads CLFLGIISIPPFANYLVFLLM. Residues 159 to 360 lie on the Mitochondrial intermembrane side of the membrane; the sequence is YLFPRQLLIR…LSTNYLGTRR (202 aa). Positions 186–360 constitute a Letm1 RBD domain; that stretch reads FRKQSHPEII…LSTNYLGTRR (175 aa).

As to quaternary structure, interacts with BRI3BP. Interacts (via C-terminal) with SMARCA4; the interaction regulates transcriptional expression of thermogenic genes in brown adipose tissue. In terms of tissue distribution, kidney, liver, skeletal muscle, heart and brain. Overexpressed in various tumors including leukemia, lymphoma, and carcinomas of the breast, kidney, ovary, stomach, colon and uterine cervix.

The protein resides in the mitochondrion outer membrane. The protein localises to the nucleus. It is found in the mitochondrion inner membrane. Its function is as follows. Plays an essential role for mitochondrial structure and function, as well as thermogenesis of brown adipocytes. In brown adipose tissue also localizes in the nucleus where it interacts with the chromatin remodeler SMARCA4 to regulate thermogenic genes expression, such as UCP1. May regulate phagocytosis and inflammatory responses to lipopolysaccharide in macrophages. Involved in tumorigenesis and may function as a negative regulator of the p53/TP53. This Homo sapiens (Human) protein is LETM1 domain-containing protein 1.